The sequence spans 299 residues: Ribosomal protein L11 methyltransferase (299 aa).

S-adenosyl-L-methionine contacts are provided by Thr-139, Gly-163, Asp-185, and Asn-232.

The protein belongs to the methyltransferase superfamily. PrmA family.

Its subcellular location is the cytoplasm. It carries out the reaction L-lysyl-[protein] + 3 S-adenosyl-L-methionine = N(6),N(6),N(6)-trimethyl-L-lysyl-[protein] + 3 S-adenosyl-L-homocysteine + 3 H(+). Functionally, methylates ribosomal protein L11. The sequence is that of Ribosomal protein L11 methyltransferase from Crocosphaera subtropica (strain ATCC 51142 / BH68) (Cyanothece sp. (strain ATCC 51142)).